An 865-amino-acid polypeptide reads, in one-letter code: Xylosyltransferase 2 (865 aa).

Topologically, residues 1-15 (MVASARVQKLVRRYK) are cytoplasmic. A helical; Signal-anchor for type II membrane protein membrane pass occupies residues 16–36 (LAIATALAILLLQGLVVWSFS). Residues 37–865 (GLEEDEAGEK…GPVKADGRLR (829 aa)) are Lumenal-facing. The interval 41-157 (DEAGEKGRQR…EGAPQPTDNG (117 aa)) is disordered. The segment covering 53 to 65 (RPLDPGEGSKDTD) has biased composition (basic and acidic residues). Basic residues predominate over residues 73–82 (STGRRHGRWR). The N-linked (GlcNAc...) asparagine glycan is linked to Asn122. Residues 125-137 (GAAAGEALVGAAG) are compositionally biased toward low complexity. 4 cysteine pairs are disulfide-bonded: Cys162/Cys190, Cys206/Cys448, Cys467/Cys480, and Cys469/Cys478. Residues Val239, Asp267, and 296–298 (TIW) contribute to the UDP-alpha-D-xylose site. An N-linked (GlcNAc...) asparagine glycan is attached at Asn327. A UDP-alpha-D-xylose-binding site is contributed by 400–401 (DW). Residues Ser481 and 504-505 (RK) each bind UDP-alpha-D-xylose. 2 cysteine pairs are disulfide-bonded: Cys581-Cys833 and Cys826-Cys839. An N-linked (GlcNAc...) asparagine glycan is attached at Asn683. The tract at residues 846–865 (SLSPDPKSELGPVKADGRLR) is disordered.

It belongs to the glycosyltransferase 14 family. XylT subfamily. As to quaternary structure, monomer. Mg(2+) serves as cofactor. It depends on Mn(2+) as a cofactor. In terms of processing, contains disulfide bonds. As to expression, widely expressed. Expressed at higher level in kidney and pancreas.

Its subcellular location is the golgi apparatus membrane. The protein localises to the secreted. The enzyme catalyses UDP-alpha-D-xylose + L-seryl-[protein] = 3-O-(beta-D-xylosyl)-L-seryl-[protein] + UDP + H(+). Its pathway is glycan metabolism; chondroitin sulfate biosynthesis. It participates in glycan metabolism; heparan sulfate biosynthesis. Its function is as follows. Catalyzes the first step in the biosynthesis of chondroitin sulfate, heparan sulfate and dermatan sulfate proteoglycans, such as DCN. Transfers D-xylose from UDP-D-xylose to specific serine residues of the core protein. The chain is Xylosyltransferase 2 (XYLT2) from Homo sapiens (Human).